The chain runs to 261 residues: MSESLHLTRNGPILEITLDRPKANAIDAKTSFAMGEAFLNFRDDPELRVAIITGGGEKFFSAGWDLKAAAEGEAPDADFGPGGFAGLTEIFDLDKPVIAAVNGYAFGGGFELALAADFIVCAENASFALPEAKLGIVPDSGGVLRLPKLLPPAIVNEMVMTGRRMSAEEALRWGIVNRVVSQSELMESARELAQQLVNSAPLAIAALKEIYRATSEMPVEEGYRYIRSGVLKHYPSVLHSEDALEGPQAFAEKRAPVWKGR.

Glu-111 functions as the Nucleophile in the catalytic mechanism. Glu-131 (proton acceptor) is an active-site residue.

The protein belongs to the enoyl-CoA hydratase/isomerase family.

The enzyme catalyses (R)-carnitinyl-CoA = crotonobetainyl-CoA + H2O. It participates in amine and polyamine metabolism; carnitine metabolism. Catalyzes the reversible dehydration of L-carnitinyl-CoA to crotonobetainyl-CoA. The sequence is that of Carnitinyl-CoA dehydratase from Salmonella typhi.